A 206-amino-acid polypeptide reads, in one-letter code: Large ribosomal subunit protein uL13z (206 aa).

Belongs to the universal ribosomal protein uL13 family.

The protein is Large ribosomal subunit protein uL13z (RPL13AA) of Arabidopsis thaliana (Mouse-ear cress).